Reading from the N-terminus, the 291-residue chain is Basic helix-loop-helix protein 80 (291 aa).

Positions 65 to 120 are disordered; it reads SAVLDTSPSVDRKRKAAEDSAHSKDSCKDGKSRRGKKASKEVEEKSTTEDEPPKGY. Residues 80–117 are compositionally biased toward basic and acidic residues; sequence AAEDSAHSKDSCKDGKSRRGKKASKEVEEKSTTEDEPP. The Nuclear localization signal motif lies at 125–132; sequence ARRGQATD. Residues 129 to 142 form a basic motif; degenerate region; it reads QATDSHSLAERVRR. A bHLH domain is found at 129–179; the sequence is QATDSHSLAERVRRERISERMRMLQALVPGCDKVTGKALILDEIINYVQSL. The helix-loop-helix motif stretch occupies residues 143–179; the sequence is ERISERMRMLQALVPGCDKVTGKALILDEIINYVQSL.

Belongs to the bHLH protein family. Homodimer. Interacts with IBH1, BC1 and LO9-177.

It localises to the nucleus. In terms of biological role, together with BCL2, positive regulator of cell elongation at least partially through increased gibberellic acid (GA) biosynthesis. This Oryza sativa subsp. indica (Rice) protein is Basic helix-loop-helix protein 80.